The primary structure comprises 920 residues: Glutamate receptor 2.2 (920 aa).

The signal sequence occupies residues 1–24; sequence MKNSKLFFRFLFLFFFFCLESSRG. Residues 25-580 are Extracellular-facing; the sequence is QDNGKTQVNI…DKFSFLKPLS (556 aa). Asn53, Asn204, Asn267, Asn331, Asn342, Asn477, and Asn542 each carry an N-linked (GlcNAc...) asparagine glycan. The helical transmembrane segment at 581-601 threads the bilayer; it reads IELWLTTLVFFFLVGISVWTL. The Cytoplasmic segment spans residues 602 to 610; sequence EHRVNSDFR. The chain crosses the membrane as a helical span at residues 611 to 631; that stretch reads GPANYQASTIFWFAFSTMVFA. The Cytoplasmic portion of the chain corresponds to 632-635; the sequence is PRER. A helical membrane pass occupies residues 636–656; sequence VLSFGARSLVVTWYFVLLVLT. Residues 657 to 830 are Extracellular-facing; sequence QSYTASLASL…VTAIQLGVGS (174 aa). The N-linked (GlcNAc...) asparagine glycan is linked to Asn702. Residues 831 to 851 form a helical membrane-spanning segment; it reads FWFLFLVVFVVCVLALGKFTF. Over 852–920 the chain is Cytoplasmic; the sequence is CFLWKTKGKD…QVNQTDPDCL (69 aa).

It belongs to the glutamate-gated ion channel (TC 1.A.10.1) family. As to quaternary structure, may form heteromers. Expressed predominantly in roots.

Its subcellular location is the membrane. Functionally, glutamate-gated receptor that probably acts as a non-selective cation channel. May be involved in light-signal transduction and calcium homeostasis via the regulation of calcium influx into cells. The protein is Glutamate receptor 2.2 (GLR2.2) of Arabidopsis thaliana (Mouse-ear cress).